The chain runs to 186 residues: Inosine/xanthosine triphosphatase (186 aa).

Gln-75 is a binding site for Mg(2+).

The protein belongs to the YjjX NTPase family. In terms of assembly, homodimer. It depends on Mg(2+) as a cofactor. Mn(2+) serves as cofactor.

The enzyme catalyses XTP + H2O = XDP + phosphate + H(+). The catalysed reaction is ITP + H2O = IDP + phosphate + H(+). In terms of biological role, phosphatase that hydrolyzes non-canonical purine nucleotides such as XTP and ITP to their respective diphosphate derivatives. Probably excludes non-canonical purines from DNA/RNA precursor pool, thus preventing their incorporation into DNA/RNA and avoiding chromosomal lesions. The protein is Inosine/xanthosine triphosphatase of Shewanella baltica (strain OS185).